The chain runs to 598 residues: Elongation factor 4 (598 aa).

The region spanning 4-181 (KKIRNFAIIA…AIVNLIPPPQ (178 aa)) is the tr-type G domain. Residues 16–21 (DHGKST) and 128–131 (NKID) contribute to the GTP site.

The protein belongs to the TRAFAC class translation factor GTPase superfamily. Classic translation factor GTPase family. LepA subfamily.

The protein localises to the cell membrane. It catalyses the reaction GTP + H2O = GDP + phosphate + H(+). Required for accurate and efficient protein synthesis under certain stress conditions. May act as a fidelity factor of the translation reaction, by catalyzing a one-codon backward translocation of tRNAs on improperly translocated ribosomes. Back-translocation proceeds from a post-translocation (POST) complex to a pre-translocation (PRE) complex, thus giving elongation factor G a second chance to translocate the tRNAs correctly. Binds to ribosomes in a GTP-dependent manner. This chain is Elongation factor 4, found in Mesomycoplasma hyopneumoniae (strain 232) (Mycoplasma hyopneumoniae).